The primary structure comprises 308 residues: UDP-N-acetylenolpyruvoylglucosamine reductase (308 aa).

The 164-residue stretch at 22–185 folds into the FAD-binding PCMH-type domain; sequence RVGGPADWLF…VEAAFRADAG (164 aa). Residue arginine 165 is part of the active site. The span at 197-211 shows a compositional bias: basic and acidic residues; sequence QIARRDSSQPTRDRS. Positions 197-228 are disordered; sequence QIARRDSSQPTRDRSAGSTFRNPAGFSSTGRA. Positions 212 to 226 are enriched in polar residues; it reads AGSTFRNPAGFSSTG. The active-site Proton donor is the serine 214. Glutamate 296 is a catalytic residue.

This sequence belongs to the MurB family. FAD serves as cofactor.

It is found in the cytoplasm. The catalysed reaction is UDP-N-acetyl-alpha-D-muramate + NADP(+) = UDP-N-acetyl-3-O-(1-carboxyvinyl)-alpha-D-glucosamine + NADPH + H(+). It participates in cell wall biogenesis; peptidoglycan biosynthesis. Cell wall formation. This is UDP-N-acetylenolpyruvoylglucosamine reductase from Cereibacter sphaeroides (strain ATCC 17025 / ATH 2.4.3) (Rhodobacter sphaeroides).